Reading from the N-terminus, the 95-residue chain is UPF0473 protein BPUM_2377 (95 aa).

The protein belongs to the UPF0473 family.

This chain is UPF0473 protein BPUM_2377, found in Bacillus pumilus (strain SAFR-032).